A 144-amino-acid chain; its full sequence is Mannitol-specific phosphotransferase enzyme IIA component (144 aa).

Residues 3–142 (ELFSNDNIFL…EEIKQVFEEA (140 aa)) enclose the PTS EIIA type-2 domain. H63 serves as the catalytic Tele-phosphohistidine intermediate. Position 63 is a phosphohistidine; by HPr (H63).

In terms of assembly, homodimer or homotrimer. Seems to be a monomer when not phosphorylated.

It localises to the cytoplasm. In terms of biological role, the phosphoenolpyruvate-dependent sugar phosphotransferase system (sugar PTS), a major carbohydrate active transport system, catalyzes the phosphorylation of incoming sugar substrates concomitantly with their translocation across the cell membrane. The enzyme II CmtAB PTS system is involved in D-mannitol transport. In Staphylococcus aureus (strain COL), this protein is Mannitol-specific phosphotransferase enzyme IIA component (mtlF).